Consider the following 93-residue polypeptide: U12-lycotoxin-Ls1b (93 aa).

An N-terminal signal peptide occupies residues 1-18 (MKFAVILLFSLVVLAVAS). Positions 19-38 (ESVEEVRREIDIEDLPEQQR) are excised as a propeptide.

The protein belongs to the neurotoxin 31 family. Post-translationally, contains 5 disulfide bonds. Expressed by the venom gland.

It is found in the secreted. The polypeptide is U12-lycotoxin-Ls1b (Lycosa singoriensis (Wolf spider)).